A 458-amino-acid chain; its full sequence is tRNA modification GTPase MnmE (458 aa).

Residues Arg-26, Glu-88, and Arg-127 each coordinate (6S)-5-formyl-5,6,7,8-tetrahydrofolate. In terms of domain architecture, TrmE-type G spans 224-378; the sequence is GLSTAIIGRP…IEDRINQLFF (155 aa). Asn-234 is a binding site for K(+). GTP-binding positions include 234-239, 253-259, and 278-281; these read NVGKSS, TDIAGTT, and DTAG. Ser-238 contacts Mg(2+). Residues Thr-253, Ile-255, and Thr-258 each coordinate K(+). Residue Thr-259 coordinates Mg(2+). A (6S)-5-formyl-5,6,7,8-tetrahydrofolate-binding site is contributed by Lys-458.

The protein belongs to the TRAFAC class TrmE-Era-EngA-EngB-Septin-like GTPase superfamily. TrmE GTPase family. As to quaternary structure, homodimer. Heterotetramer of two MnmE and two MnmG subunits. The cofactor is K(+).

It localises to the cytoplasm. In terms of biological role, exhibits a very high intrinsic GTPase hydrolysis rate. Involved in the addition of a carboxymethylaminomethyl (cmnm) group at the wobble position (U34) of certain tRNAs, forming tRNA-cmnm(5)s(2)U34. The polypeptide is tRNA modification GTPase MnmE (Streptococcus pyogenes serotype M28 (strain MGAS6180)).